The following is a 215-amino-acid chain: MTLAGQTIAVIDYGMGNLRSVSKALEHVAGGKQVIVTADPAVVAAAERVVFPGQGAMPDCMRELDARGLRTAVLAAAKDKPFLGICVGEQMLFEHSDEGNVPALGVFAGNVKRFPDEKMHLPTGERLKVPHMGWNEVRQKPHALWSGIADGSRFYFVHSYFVEPADLALVTGICEYGVPFTCAVGRDNIFAVQFHPEKSARDGLQLLKNFVEWQP.

Residues 7-215 (TIAVIDYGMG…LLKNFVEWQP (209 aa)) enclose the Glutamine amidotransferase type-1 domain. C86 functions as the Nucleophile in the catalytic mechanism. Active-site residues include H195 and E197.

In terms of assembly, heterodimer of HisH and HisF.

It is found in the cytoplasm. The enzyme catalyses 5-[(5-phospho-1-deoxy-D-ribulos-1-ylimino)methylamino]-1-(5-phospho-beta-D-ribosyl)imidazole-4-carboxamide + L-glutamine = D-erythro-1-(imidazol-4-yl)glycerol 3-phosphate + 5-amino-1-(5-phospho-beta-D-ribosyl)imidazole-4-carboxamide + L-glutamate + H(+). The catalysed reaction is L-glutamine + H2O = L-glutamate + NH4(+). The protein operates within amino-acid biosynthesis; L-histidine biosynthesis; L-histidine from 5-phospho-alpha-D-ribose 1-diphosphate: step 5/9. Its function is as follows. IGPS catalyzes the conversion of PRFAR and glutamine to IGP, AICAR and glutamate. The HisH subunit catalyzes the hydrolysis of glutamine to glutamate and ammonia as part of the synthesis of IGP and AICAR. The resulting ammonia molecule is channeled to the active site of HisF. This is Imidazole glycerol phosphate synthase subunit HisH from Dechloromonas aromatica (strain RCB).